Here is a 389-residue protein sequence, read N- to C-terminus: Zinc finger C2HC domain-containing protein 1C homolog (389 aa).

Disordered stretches follow at residues 16-44 (MLPH…SQQS) and 84-115 (SYPH…GPQS). 2 stretches are compositionally biased toward polar residues: residues 35–44 (YEQGDSSQQS) and 90–102 (GISQ…DSQG). A coiled-coil region spans residues 211-266 (VQIRRLEAAGESLEEEIRRKQILLRGKLKKTEEELRRIQMQKEQAKENENRELQKI). Disordered regions lie at residues 301–320 (REDE…QLSD) and 343–389 (SELS…PQLG). Over residues 307 to 317 (GRSQQNSSPFQ) the composition is skewed to polar residues. The segment covering 368–382 (SSLSMAPDSSGSSGS) has biased composition (low complexity).

It belongs to the ZC2HC1 family.

The chain is Zinc finger C2HC domain-containing protein 1C homolog (ZC2HC1C) from Pongo abelii (Sumatran orangutan).